The sequence spans 152 residues: Putative pre-16S rRNA nuclease (152 aa).

This sequence belongs to the YqgF nuclease family.

The protein localises to the cytoplasm. Its function is as follows. Could be a nuclease involved in processing of the 5'-end of pre-16S rRNA. This is Putative pre-16S rRNA nuclease from Nitrosococcus oceani (strain ATCC 19707 / BCRC 17464 / JCM 30415 / NCIMB 11848 / C-107).